Consider the following 462-residue polypeptide: Retinoic acid receptor RXR-alpha (462 aa).

The tract at residues 1 to 107 (MDTKHFLPLD…MNPVSSSEDI (107 aa)) is disordered. Residues 1 to 134 (MDTKHFLPLD…GNMASFTKHI (134 aa)) are modulating. Residue lysine 4 forms a Glycyl lysine isopeptide (Lys-Gly) (interchain with G-Cter in SUMO2) linkage. Residues 11–24 (FSTQVNSSLTSPTG) show a composition bias toward polar residues. 2 positions are modified to phosphoserine: serine 21 and serine 27. Positions 49–58 (SPISTLSSPI) are enriched in polar residues. A phosphoserine; by MAPK8 and MAPK9 mark is found at serine 56 and serine 70. The span at 78–104 (SVPTTPTLGFSTGSPQLSSPMNPVSSS) shows a compositional bias: polar residues. The residue at position 82 (threonine 82) is a Phosphothreonine; by MAPK8 and MAPK9. A Glycyl lysine isopeptide (Lys-Gly) (interchain with G-Cter in SUMO) cross-link involves residue lysine 108. Serine 129 bears the Phosphoserine mark. Cysteine 135 and cysteine 138 together coordinate Zn(2+). Residues 135 to 155 (CAICGDRSSGKHYGVYSCEGC) form an NR C4-type zinc finger. A DNA-binding region (nuclear receptor) is located at residues 135-200 (CAICGDRSSG…RYQKCLAMGM (66 aa)). An N6-acetyllysine; by EP300 modification is found at lysine 145. Zn(2+) is bound by residues cysteine 152 and cysteine 155. Residues 160–165 (KRTVRK) are nuclear localization signal. The Zn(2+) site is built by cysteine 171, cysteine 177, cysteine 187, and cysteine 190. The NR C4-type zinc finger occupies 171-195 (CRDNKDCLIDKRQRNRCQYCRYQKC). The tract at residues 201-224 (KREAVQEERQRGKDRNENEVESTS) is hinge. A compositionally biased stretch (basic and acidic residues) spans 206 to 218 (QEERQRGKDRNEN). The tract at residues 206-228 (QEERQRGKDRNENEVESTSSANE) is disordered. The 232-residue stretch at 227 to 458 (NEDMPVERIL…TFLMEMLEAP (232 aa)) folds into the NR LBD domain. Serine 259 carries the phosphoserine modification. Serine 260 is modified (phosphoserine; by MAPK8 and MAPK9). Arginine 316 and alanine 327 together coordinate 9-cis-retinoate. All-trans-retinoate is bound by residues arginine 316 and alanine 327. The tract at residues 348–368 (RVLTELVSKMRDMQMDKTELG) is required for nuclear export.

The protein belongs to the nuclear hormone receptor family. NR2 subfamily. In terms of assembly, homodimer. Heterodimer (via C-terminus) with RARA; required for ligand-dependent retinoic acid receptor transcriptional activity; association with RARA is enhanced by pulsatile shear stress. Heterodimer with PPARA (via the leucine-like zipper in the LBD); the interaction is required for PPARA transcriptional activity. Heterodimerizes with PPARG. Heterodimerizes (via NR LBD) with RARB. Heterodimerizes with NR1H4; the heterodimerization enhances the binding affinity for LXXLL motifs from coactivators. Interacts with NCOA3 and NCOA6 coactivators. Interacts with coactivator FAM120B. Interacts with coactivator PELP1, SENP6, SFPQ, DNTTIP2 and RNF8. Interacts with PRMT2. Interacts with ASXL1. Interacts with BHLHE40/DEC1, BHLHE41/DEC2, NCOR1 and NCOR2. Interacts in a ligand-dependent fashion with MED1 and NCOA1. Interacts with VDR. Interacts with EP300; the interaction is decreased by 9-cis retinoic acid. Heterodimer (via C-terminus) with NR4A1 (via DNA-binding domain); DNA-binding of the heterodimer is enhanced by 9-cis retinoic acid. NR4A1 competes with EP300 for interaction with RXRA and thereby attenuates EP300 mediated acetylation of RXRA. In the absence of hormonal ligand, interacts with TACC1. Interacts ith IGFBP3. (Microbial infection) Interacts (via the DNA binding domain) with HCV core protein; the interaction enhances the transcriptional activities of the RXRA/RARA and the RXRA/PPARA heterodimers. Acetylated by EP300; acetylation enhances DNA binding and transcriptional activity. In terms of processing, phosphorylated on serine and threonine residues mainly in the N-terminal modulating domain. Constitutively phosphorylated on Ser-21 in the presence or absence of ligand. Under stress conditions, hyperphosphorylated by activated JNK on Ser-56, Ser-70, Thr-82 and Ser-260. Phosphorylated on Ser-27, in vitro, by PKA. This phosphorylation is required for repression of cAMP-mediated transcriptional activity of RARA. Post-translationally, ubiquitinated by UBR5, leading to its degradation: UBR5 specifically recognizes and binds ligand-bound RXRA when it is not associated with coactivators (NCOAs). In presence of NCOAs, the UBR5-degron is not accessible, preventing its ubiquitination and degradation. Sumoylation negatively regulates transcriptional activity. Desumoylated specifically by SENP6. In terms of tissue distribution, expressed in lung fibroblasts (at protein level). Expressed in monocytes. Highly expressed in liver, also found in kidney and brain.

It is found in the nucleus. It localises to the cytoplasm. The protein localises to the mitochondrion. Receptor for retinoic acid that acts as a transcription factor. Forms homo- or heterodimers with retinoic acid receptors (RARs) and binds to target response elements in response to their ligands, all-trans or 9-cis retinoic acid, to regulate gene expression in various biological processes. The RAR/RXR heterodimers bind to the retinoic acid response elements (RARE) composed of tandem 5'-AGGTCA-3' sites known as DR1-DR5 to regulate transcription. The high affinity ligand for retinoid X receptors (RXRs) is 9-cis retinoic acid. In the absence of ligand, the RXR-RAR heterodimers associate with a multiprotein complex containing transcription corepressors that induce histone deacetylation, chromatin condensation and transcriptional suppression. On ligand binding, the corepressors dissociate from the receptors and coactivators are recruited leading to transcriptional activation. Serves as a common heterodimeric partner for a number of nuclear receptors, such as RARA, RARB and PPARA. The RXRA/RARB heterodimer can act as a transcriptional repressor or transcriptional activator, depending on the RARE DNA element context. The RXRA/PPARA heterodimer is required for PPARA transcriptional activity on fatty acid oxidation genes such as ACOX1 and the P450 system genes. Together with RARA, positively regulates microRNA-10a expression, thereby inhibiting the GATA6/VCAM1 signaling response to pulsatile shear stress in vascular endothelial cells. Acts as an enhancer of RARA binding to RARE DNA element. May facilitate the nuclear import of heterodimerization partners such as VDR and NR4A1. Promotes myelin debris phagocytosis and remyelination by macrophages. Plays a role in the attenuation of the innate immune system in response to viral infections, possibly by negatively regulating the transcription of antiviral genes such as type I IFN genes. Involved in the regulation of calcium signaling by repressing ITPR2 gene expression, thereby controlling cellular senescence. This chain is Retinoic acid receptor RXR-alpha (RXRA), found in Homo sapiens (Human).